A 320-amino-acid polypeptide reads, in one-letter code: Cytosolic Fe-S cluster assembly factor NUBP1 (320 aa).

Methionine 1 carries the N-acetylmethionine modification. [4Fe-4S] cluster is bound by residues cysteine 8, cysteine 22, cysteine 25, and cysteine 31. ATP is bound at residue 62–69; the sequence is GKGGVGKS. [4Fe-4S] cluster-binding residues include cysteine 235 and cysteine 238.

Belongs to the Mrp/NBP35 ATP-binding proteins family. NUBP1/NBP35 subfamily. In terms of assembly, heterotetramer of 2 NUBP1 and 2 NUBP2 chains. Interacts with KIFC1. Interacts with the BBS/CCT complex subunit CCT1. [4Fe-4S] cluster serves as cofactor.

Its subcellular location is the cytoplasm. It localises to the nucleus. It is found in the cell projection. The protein resides in the cytoskeleton. The protein localises to the cilium axoneme. Its subcellular location is the cilium basal body. It localises to the microtubule organizing center. It is found in the centrosome. The protein resides in the centriole. Component of the cytosolic iron-sulfur (Fe/S) protein assembly (CIA) machinery. Required for maturation of extramitochondrial Fe-S proteins. The NUBP1-NUBP2 heterotetramer forms a Fe-S scaffold complex, mediating the de novo assembly of an Fe-S cluster and its transfer to target apoproteins. Implicated in the regulation of centrosome duplication. Negatively regulates cilium formation and structure. This Bos taurus (Bovine) protein is Cytosolic Fe-S cluster assembly factor NUBP1.